A 419-amino-acid chain; its full sequence is DNA polymerase IV (419 aa).

In terms of domain architecture, UmuC spans 12–193 (IFHIDMNCFY…MSVEEMYGIG (182 aa)). 2 residues coordinate Mg(2+): aspartate 16 and aspartate 112. Glutamate 113 is a catalytic residue. The interval 388–419 (IITSQKNKNESQENQQPRTSFQKDFLDDYKKP) is disordered.

Belongs to the DNA polymerase type-Y family. In terms of assembly, monomer. It depends on Mg(2+) as a cofactor.

The protein resides in the cytoplasm. The enzyme catalyses DNA(n) + a 2'-deoxyribonucleoside 5'-triphosphate = DNA(n+1) + diphosphate. Its function is as follows. Poorly processive, error-prone DNA polymerase involved in untargeted mutagenesis. Copies undamaged DNA at stalled replication forks, which arise in vivo from mismatched or misaligned primer ends. These misaligned primers can be extended by PolIV. Exhibits no 3'-5' exonuclease (proofreading) activity. May be involved in translesional synthesis, in conjunction with the beta clamp from PolIII. This is DNA polymerase IV from Oceanobacillus iheyensis (strain DSM 14371 / CIP 107618 / JCM 11309 / KCTC 3954 / HTE831).